The chain runs to 475 residues: Ribulose bisphosphate carboxylase large chain (475 aa).

A propeptide spanning residues 1–2 (MS) is cleaved from the precursor. Position 3 is an N-acetylproline (Pro-3). Lys-14 carries the N6,N6,N6-trimethyllysine modification. Substrate contacts are provided by Asn-123 and Thr-173. Catalysis depends on Lys-175, which acts as the Proton acceptor. Lys-177 serves as a coordination point for substrate. Residues Lys-201, Asp-203, and Glu-204 each coordinate Mg(2+). Lys-201 is subject to N6-carboxylysine. The Proton acceptor role is filled by His-294. The substrate site is built by Arg-295, His-327, and Ser-379.

Belongs to the RuBisCO large chain family. Type I subfamily. In terms of assembly, heterohexadecamer of 8 large chains and 8 small chains; disulfide-linked. The disulfide link is formed within the large subunit homodimers. Mg(2+) is required as a cofactor. Post-translationally, the disulfide bond which can form in the large chain dimeric partners within the hexadecamer appears to be associated with oxidative stress and protein turnover.

The protein resides in the plastid. It localises to the chloroplast. It catalyses the reaction 2 (2R)-3-phosphoglycerate + 2 H(+) = D-ribulose 1,5-bisphosphate + CO2 + H2O. It carries out the reaction D-ribulose 1,5-bisphosphate + O2 = 2-phosphoglycolate + (2R)-3-phosphoglycerate + 2 H(+). Its function is as follows. RuBisCO catalyzes two reactions: the carboxylation of D-ribulose 1,5-bisphosphate, the primary event in carbon dioxide fixation, as well as the oxidative fragmentation of the pentose substrate in the photorespiration process. Both reactions occur simultaneously and in competition at the same active site. In Pinus thunbergii (Japanese black pine), this protein is Ribulose bisphosphate carboxylase large chain.